The primary structure comprises 269 residues: Bis(5'-nucleosyl)-tetraphosphatase, symmetrical (269 aa).

The protein belongs to the Ap4A hydrolase family.

The catalysed reaction is P(1),P(4)-bis(5'-adenosyl) tetraphosphate + H2O = 2 ADP + 2 H(+). Functionally, hydrolyzes diadenosine 5',5'''-P1,P4-tetraphosphate to yield ADP. The sequence is that of Bis(5'-nucleosyl)-tetraphosphatase, symmetrical from Vibrio vulnificus (strain CMCP6).